Consider the following 160-residue polypeptide: Troponin C, skeletal muscle (160 aa).

4 consecutive EF-hand domains span residues glutamate 15–asparagine 50, proline 51–glutamate 86, lysine 91–proline 126, and valine 127–glutamine 160. Aspartate 28, aspartate 30, aspartate 34, glutamate 39, aspartate 64, aspartate 66, serine 68, threonine 70, glutamate 75, aspartate 104, asparagine 106, aspartate 108, glutamate 115, aspartate 140, asparagine 142, aspartate 144, lysine 146, and glutamate 151 together coordinate Ca(2+).

It belongs to the troponin C family.

Its function is as follows. Troponin is the central regulatory protein of striated muscle contraction. Tn consists of three components: Tn-I which is the inhibitor of actomyosin ATPase, Tn-T which contains the binding EF-hand for tropomyosin and Tn-C. The binding of calcium to Tn-C abolishes the inhibitory action of Tn on actin filaments. The sequence is that of Troponin C, skeletal muscle from Anguilla anguilla (European freshwater eel).